Reading from the N-terminus, the 228-residue chain is Urease accessory protein UreF 1 (228 aa).

This sequence belongs to the UreF family. As to quaternary structure, ureD, UreF and UreG form a complex that acts as a GTP-hydrolysis-dependent molecular chaperone, activating the urease apoprotein by helping to assemble the nickel containing metallocenter of UreC. The UreE protein probably delivers the nickel.

The protein resides in the cytoplasm. In terms of biological role, required for maturation of urease via the functional incorporation of the urease nickel metallocenter. This is Urease accessory protein UreF 1 from Brucella anthropi (strain ATCC 49188 / DSM 6882 / CCUG 24695 / JCM 21032 / LMG 3331 / NBRC 15819 / NCTC 12168 / Alc 37) (Ochrobactrum anthropi).